The following is a 438-amino-acid chain: Trigger factor (438 aa).

One can recognise a PPIase FKBP-type domain in the interval Gly-163–Arg-248.

Belongs to the FKBP-type PPIase family. Tig subfamily.

Its subcellular location is the cytoplasm. The enzyme catalyses [protein]-peptidylproline (omega=180) = [protein]-peptidylproline (omega=0). Involved in protein export. Acts as a chaperone by maintaining the newly synthesized protein in an open conformation. Functions as a peptidyl-prolyl cis-trans isomerase. This Syntrophomonas wolfei subsp. wolfei (strain DSM 2245B / Goettingen) protein is Trigger factor.